A 414-amino-acid chain; its full sequence is DNA polymerase IV (414 aa).

One can recognise a UmuC domain in the interval 8 to 189; the sequence is IFHIDMNSFY…LPIEEMHGIG (182 aa). D12 and D108 together coordinate Mg(2+). The active site involves E109. A disordered region spans residues 394–414; sequence EESKTRGTSFNRDFFQDEKKR.

This sequence belongs to the DNA polymerase type-Y family. Monomer. Requires Mg(2+) as cofactor.

It is found in the cytoplasm. It carries out the reaction DNA(n) + a 2'-deoxyribonucleoside 5'-triphosphate = DNA(n+1) + diphosphate. Functionally, poorly processive, error-prone DNA polymerase involved in untargeted mutagenesis. Copies undamaged DNA at stalled replication forks, which arise in vivo from mismatched or misaligned primer ends. These misaligned primers can be extended by PolIV. Exhibits no 3'-5' exonuclease (proofreading) activity. May be involved in translesional synthesis, in conjunction with the beta clamp from PolIII. This is DNA polymerase IV from Bacillus velezensis (strain DSM 23117 / BGSC 10A6 / LMG 26770 / FZB42) (Bacillus amyloliquefaciens subsp. plantarum).